A 1835-amino-acid chain; its full sequence is Urea amidolyase (1835 aa).

Residues G122–T129 and K747 contribute to the ATP site. The region spanning L632–Y1075 is the Biotin carboxylation domain. Residues R751–A948 form the ATP-grasp domain. At S803 the chain carries Phosphoserine. Positions 830 and 865 each coordinate ATP. Residues D1754–E1832 form the Biotinyl-binding domain. K1798 bears the N6-biotinyllysine mark.

Monomer. It depends on biotin as a cofactor.

The catalysed reaction is urea + hydrogencarbonate + ATP = urea-1-carboxylate + ADP + phosphate + H(+). It catalyses the reaction urea-1-carboxylate + H2O + 3 H(+) = 2 NH4(+) + 2 CO2. It participates in nitrogen metabolism; urea degradation; CO(2) and NH(3) from urea (allophanate route): step 1/2. The protein operates within nitrogen metabolism; urea degradation; CO(2) and NH(3) from urea (allophanate route): step 2/2. In terms of biological role, hydrolysis of urea to ammonia and CO(2). The polypeptide is Urea amidolyase (DUR1,2) (Saccharomyces cerevisiae (strain ATCC 204508 / S288c) (Baker's yeast)).